We begin with the raw amino-acid sequence, 194 residues long: AP-3 complex subunit sigma (194 aa).

This sequence belongs to the adaptor complexes small subunit family. As to quaternary structure, adaptor protein complex 3 (AP-3) is a heterotetramer composed of 2 large adaptins (APL5 and APL6), a medium adaptin (APM3) and a small adaptin (APS3).

It localises to the golgi apparatus. It is found in the cytoplasmic vesicle membrane. Part of the AP-3 complex, an adaptor-related complex which is not clathrin-associated. The complex is associated with the Golgi region as well as more peripheral structures. It facilitates the budding of vesicles from the Golgi membrane and may be directly involved in trafficking to the vacuole. Required for the transport via the ALP pathway, which directs the transport of the cargo proteins PHO8 and VAM3 to the vacuole. The chain is AP-3 complex subunit sigma (APS3) from Saccharomyces cerevisiae (strain ATCC 204508 / S288c) (Baker's yeast).